Consider the following 333-residue polypeptide: Ketol-acid reductoisomerase (NADP(+)) (333 aa).

One can recognise a KARI N-terminal Rossmann domain in the interval alanine 2–threonine 182. NADP(+)-binding positions include tyrosine 25–glutamine 28, arginine 48, serine 51, serine 53, and aspartate 83–glutamine 86. Residue histidine 108 is part of the active site. Glycine 134 serves as a coordination point for NADP(+). The 149-residue stretch at serine 183–leucine 331 folds into the KARI C-terminal knotted domain. Residues aspartate 191, glutamate 195, glutamate 227, and glutamate 231 each coordinate Mg(2+). Substrate is bound at residue serine 252.

Belongs to the ketol-acid reductoisomerase family. Mg(2+) serves as cofactor.

It carries out the reaction (2R)-2,3-dihydroxy-3-methylbutanoate + NADP(+) = (2S)-2-acetolactate + NADPH + H(+). It catalyses the reaction (2R,3R)-2,3-dihydroxy-3-methylpentanoate + NADP(+) = (S)-2-ethyl-2-hydroxy-3-oxobutanoate + NADPH + H(+). It functions in the pathway amino-acid biosynthesis; L-isoleucine biosynthesis; L-isoleucine from 2-oxobutanoate: step 2/4. The protein operates within amino-acid biosynthesis; L-valine biosynthesis; L-valine from pyruvate: step 2/4. In terms of biological role, involved in the biosynthesis of branched-chain amino acids (BCAA). Catalyzes an alkyl-migration followed by a ketol-acid reduction of (S)-2-acetolactate (S2AL) to yield (R)-2,3-dihydroxy-isovalerate. In the isomerase reaction, S2AL is rearranged via a Mg-dependent methyl migration to produce 3-hydroxy-3-methyl-2-ketobutyrate (HMKB). In the reductase reaction, this 2-ketoacid undergoes a metal-dependent reduction by NADPH to yield (R)-2,3-dihydroxy-isovalerate. This is Ketol-acid reductoisomerase (NADP(+)) from Leptospira biflexa serovar Patoc (strain Patoc 1 / Ames).